The chain runs to 1147 residues: Nucleolar protein 8 (1147 aa).

An RRM domain is found at K8–E89. Residue K225 forms a Glycyl lysine isopeptide (Lys-Gly) (interchain with G-Cter in SUMO2) linkage. Residues S300 and S306 each carry the phosphoserine modification. K316 participates in a covalent cross-link: Glycyl lysine isopeptide (Lys-Gly) (interchain with G-Cter in SUMO2). The residue at position 362 (Y362) is a Phosphotyrosine. A phosphoserine mark is found at S364 and S365. The residue at position 367 (T367) is a Phosphothreonine. The segment at K379–K401 is disordered. Positions S383–Q400 are enriched in polar residues. The residue at position 416 (S416) is a Phosphoserine. Disordered stretches follow at residues K427–K452, A472–N511, M592–A659, K686–Q741, A766–E888, K932–L963, and S986–C1017. A compositionally biased stretch (acidic residues) spans D441–E450. 2 stretches are compositionally biased toward polar residues: residues M592–Q610 and T629–P650. Composition is skewed to basic and acidic residues over residues S700 to Q714 and A732 to Q741. S704 carries the post-translational modification Phosphoserine. T777 is modified (phosphothreonine). Residues S783 and S787 each carry the phosphoserine modification. The segment covering C799 to V809 has biased composition (basic and acidic residues). 5 positions are modified to phosphoserine: S819, S820, S825, S827, and S872. The span at S857 to K883 shows a compositional bias: basic and acidic residues. 2 coiled-coil regions span residues L868–N898 and I937–L963. A compositionally biased stretch (basic and acidic residues) spans D994–N1011. K1038 is covalently cross-linked (Glycyl lysine isopeptide (Lys-Gly) (interchain with G-Cter in SUMO2)). Positions P1055 to P1086 are disordered. Phosphoserine is present on residues S1063, S1064, S1065, and S1080.

As to quaternary structure, interacts with the GTP form of RRAGA, RRAGC and RRAGD. Interacts with NIP7. Interacts with DDX18; the interaction is RNA-dependent. Interacts with DDX47; the interaction is RNA-dependent. In terms of processing, phosphorylated.

It localises to the nucleus. The protein localises to the nucleolus. Plays an essential role in the survival of diffuse-type gastric cancer cells. Acts as a nucleolar anchoring protein for DDX47. May be involved in regulation of gene expression at the post-transcriptional level or in ribosome biogenesis in cancer cells. In Mus musculus (Mouse), this protein is Nucleolar protein 8.